The following is a 273-amino-acid chain: Undecaprenyl-diphosphatase (273 aa).

The next 7 membrane-spanning stretches (helical) occupy residues 13-35, 45-62, 82-102, 108-128, 186-206, 219-239, and 250-270; these read GLVEGFTEFLPISSTGHLIVFGN, VFEITIQLGAVLAVVFEY, FVLNLAIAFIPAAVMGLLFGK, LFNPLSVAVMLVLGGFFILWV, TEFSFFLAVPMMVAATAYDVL, LILIGFVAAFVSGLVAVKALL, and FAYYRIVFGIAIIILWLSGWI.

This sequence belongs to the UppP family.

It localises to the cell inner membrane. The catalysed reaction is di-trans,octa-cis-undecaprenyl diphosphate + H2O = di-trans,octa-cis-undecaprenyl phosphate + phosphate + H(+). Its function is as follows. Catalyzes the dephosphorylation of undecaprenyl diphosphate (UPP). Confers resistance to bacitracin. This chain is Undecaprenyl-diphosphatase, found in Neisseria meningitidis serogroup A / serotype 4A (strain DSM 15465 / Z2491).